A 931-amino-acid chain; its full sequence is Netrin receptor UNC5C (931 aa).

An N-terminal signal peptide occupies residues 1–39; it reads MGKGLEGTAARCGLGMGYLLHSVVLPALAVLGASRPGSA. The Extracellular segment spans residues 40–380; sequence AQDDDFFHEL…APDSDDVALY (341 aa). The Ig-like domain maps to 62-159; sequence PHFLIEPEEA…AGTTKSRKAY (98 aa). 9 disulfide bridges follow: cysteine 83/cysteine 144, cysteine 95/cysteine 142, cysteine 188/cysteine 239, cysteine 272/cysteine 309, cysteine 276/cysteine 313, cysteine 287/cysteine 299, cysteine 328/cysteine 362, cysteine 332/cysteine 367, and cysteine 340/cysteine 352. One can recognise an Ig-like C2-type domain in the interval 161–256; the sequence is RIAYLRKTFE…KRKSTTATVI (96 aa). Asparagine 236 is a glycosylation site (N-linked (GlcNAc...) asparagine). TSP type-1 domains lie at 260 to 314 and 316 to 368; these read NGGW…TLCP and DGKW…GLCM. N-linked (GlcNAc...) asparagine glycosylation is present at asparagine 361. The chain crosses the membrane as a helical span at residues 381-401; that stretch reads VGIVIAVIVCLAISVVVALFV. Topologically, residues 402-931 are cytoplasmic; the sequence is YRKNHRDFES…VVSLAAEGNY (530 aa). The ZU5 domain maps to 530-664; it reads CTAFGTFNSL…EACHILTETL (135 aa). The 80-residue stretch at 850–929 folds into the Death domain; that stretch reads QKLCSSLDAP…ETVVSLAAEG (80 aa).

The protein belongs to the unc-5 family. In terms of tissue distribution, restricted to proprioceptive neurons.

Its subcellular location is the cell membrane. It is found in the cell surface. It localises to the synapse. The protein localises to the synaptosome. The protein resides in the cell projection. Its subcellular location is the axon. It is found in the dendrite. It localises to the growth cone. The protein localises to the lamellipodium. The protein resides in the filopodium. Functionally, receptor for netrin required for axon guidance. Mediates axon repulsion of neuronal growth cones in the developing nervous system upon ligand binding. Involved in dorsal root ganglion axon projection towards the spinal cord. The polypeptide is Netrin receptor UNC5C (UNC5C) (Gallus gallus (Chicken)).